A 213-amino-acid chain; its full sequence is Adenylate kinase (213 aa).

10 to 15 (GAGKGT) is an ATP binding site. Residues 30–59 (STGNLLRDEVKSKTDLGVDIEKLISNGKFV) form an NMP region. Residues Thr-31, Arg-36, 57-59 (KFV), 85-88 (GYPR), and Gln-92 each bind AMP. The LID stretch occupies residues 126 to 162 (GRMTCEKCNMTLNEYFNKEQIELHPCGVEHLKKRKDD). Arg-127 contacts ATP. Residues Arg-159 and Arg-170 each contribute to the AMP site. Gly-198 contacts ATP.

It belongs to the adenylate kinase family. As to quaternary structure, monomer.

It is found in the cytoplasm. The catalysed reaction is AMP + ATP = 2 ADP. Its pathway is purine metabolism; AMP biosynthesis via salvage pathway; AMP from ADP: step 1/1. Functionally, catalyzes the reversible transfer of the terminal phosphate group between ATP and AMP. Plays an important role in cellular energy homeostasis and in adenine nucleotide metabolism. In Pelagibacter ubique (strain HTCC1062), this protein is Adenylate kinase.